We begin with the raw amino-acid sequence, 257 residues long: Microfibril-associated glycoprotein 4 (257 aa).

The first 22 residues, 1–22 (MKALPALPLMLMLLSMPPPCAP), serve as a signal peptide directing secretion. The Cell attachment site motif lies at 28–30 (RGD). Residues 34–257 (KSCLQQPLDC…KRTEMKIRRA (224 aa)) enclose the Fibrinogen C-terminal domain. N-linked (GlcNAc...) asparagine glycans are attached at residues N89 and N139.

In terms of assembly, homodimer. Can also form higher oligomers. Interacts with FBN1, FBN2 and LOX. Interacts with COL1A1 in a Ca (2+)-dependent manner. Interacts with ELN in a Ca (2+)-dependent manner; this interaction promotes ELN self-assembly.

Its subcellular location is the secreted. The protein resides in the extracellular space. It localises to the extracellular matrix. Could be involved in calcium-dependent cell adhesion or intercellular interactions. May contribute to the elastic fiber assembly and/or maintenance. The chain is Microfibril-associated glycoprotein 4 (Mfap4) from Mus musculus (Mouse).